We begin with the raw amino-acid sequence, 171 residues long: Small ribosomal subunit protein uS4 (171 aa).

Residues 103–167 (RRLQTLVHKR…SPMKKQIEAA (65 aa)) form the S4 RNA-binding domain.

This sequence belongs to the universal ribosomal protein uS4 family. In terms of assembly, part of the 30S ribosomal subunit. Contacts protein S5. The interaction surface between S4 and S5 is involved in control of translational fidelity.

Functionally, one of the primary rRNA binding proteins, it binds directly to 16S rRNA where it nucleates assembly of the body of the 30S subunit. Its function is as follows. With S5 and S12 plays an important role in translational accuracy. This chain is Small ribosomal subunit protein uS4, found in Methanothermobacter thermautotrophicus (strain ATCC 29096 / DSM 1053 / JCM 10044 / NBRC 100330 / Delta H) (Methanobacterium thermoautotrophicum).